The following is a 32-amino-acid chain: Photosystem II reaction center protein Z (32 aa).

Residues 9 to 31 (FILLGAVTWAILVFIVGSLNSYV) form a helical membrane-spanning segment.

This sequence belongs to the PsbZ family. As to quaternary structure, PSII is composed of 1 copy each of membrane proteins PsbA, PsbB, PsbC, PsbD, PsbE, PsbF, PsbH, PsbI, PsbJ, PsbK, PsbL, PsbM, PsbT, PsbY, PsbZ, Psb30/Ycf12, at least 3 peripheral proteins of the oxygen-evolving complex and a large number of cofactors. It forms dimeric complexes.

It localises to the plastid. The protein resides in the chloroplast thylakoid membrane. May control the interaction of photosystem II (PSII) cores with the light-harvesting antenna, regulates electron flow through the 2 photosystem reaction centers. PSII is a light-driven water plastoquinone oxidoreductase, using light energy to abstract electrons from H(2)O, generating a proton gradient subsequently used for ATP formation. In Euglena stellata, this protein is Photosystem II reaction center protein Z.